The following is a 347-amino-acid chain: S-adenosylmethionine:tRNA ribosyltransferase-isomerase (347 aa).

Belongs to the QueA family. Monomer.

The protein localises to the cytoplasm. It carries out the reaction 7-aminomethyl-7-carbaguanosine(34) in tRNA + S-adenosyl-L-methionine = epoxyqueuosine(34) in tRNA + adenine + L-methionine + 2 H(+). Its pathway is tRNA modification; tRNA-queuosine biosynthesis. Its function is as follows. Transfers and isomerizes the ribose moiety from AdoMet to the 7-aminomethyl group of 7-deazaguanine (preQ1-tRNA) to give epoxyqueuosine (oQ-tRNA). In Xylella fastidiosa (strain M12), this protein is S-adenosylmethionine:tRNA ribosyltransferase-isomerase.